The chain runs to 725 residues: Another transcription unit protein (725 aa).

Positions 1-10 (MGSQNSDDDS) are enriched in acidic residues. 3 disordered regions span residues 1–379 (MGSQ…PETR), 566–603 (RQAM…EGSD), and 617–725 (YKKG…SDND). Over residues 11-70 (GSSGSSRSGSRSVTPQGGSAPGSQRSRRSGSGSDRSRSGSRSSRSRSGSGSPRSARSGSA) the composition is skewed to low complexity. The segment covering 82–101 (RSKRSRSAHSRRSGSARSRK) has biased composition (basic residues). Positions 104–116 (TPESPQSHRSGSL) are enriched in polar residues. Residues 117-140 (QSRKSGSPQSRRSGSPQSRKSGST) show a composition bias toward low complexity. Over residues 141–160 (HSRRSGSAHSRRSGSARSRK) the composition is skewed to basic residues. Phosphoserine is present on residues S175, S186, S188, and S190. Residues 206 to 223 (SRSRSRSRSGSRTSRSRS) show a composition bias toward basic residues. Low complexity predominate over residues 224 to 242 (KTGTPSPNRSRSGSASGSG). Phosphoserine occurs at positions 265, 267, and 269. T286 is subject to Phosphothreonine. Phosphoserine occurs at positions 288, 290, and 312. A compositionally biased stretch (acidic residues) spans 306–318 (GDADDISDDEDEA). Over residues 325-353 (SPVRSKSRSQSKSHSHSRSMSHSRSRSRS) the composition is skewed to basic residues. Over residues 354–369 (RSRDKVESQVESAPKE) the composition is skewed to basic and acidic residues. Position 355 is a phosphoserine (S355). The span at 571–582 (NQHKSLPKKKKP) shows a compositional bias: basic residues. T593 carries the phosphothreonine modification. 3 positions are modified to phosphoserine: S595, S602, and S631. T632 bears the Phosphothreonine mark. 3 positions are modified to phosphoserine: S635, S636, and S642. Over residues 644 to 665 (FEARRSKKVDKAKASKALRDSD) the composition is skewed to basic and acidic residues. Gly residues predominate over residues 710-725 (SGSGSGSGSGSGSDND).

This is Another transcription unit protein (Atu) from Drosophila melanogaster (Fruit fly).